The primary structure comprises 567 residues: Mitochondrial distribution and morphology protein 34 (567 aa).

In terms of domain architecture, SMP-LTD spans 1-224 (MSFKFNEESF…LPSALFNMSR (224 aa)). Residues 392–416 (NKATETSSNLNADSEITPVSSSHNA) show a composition bias toward polar residues. Residues 392–453 (NKATETSSNL…NRSSSFTSSI (62 aa)) are disordered. The segment covering 417 to 452 (TSSVNTITSLTTSSLGSTAGSSNSKNTNRSSSFTSS) has biased composition (low complexity).

The protein belongs to the MDM34 family. In terms of assembly, component of the ER-mitochondria encounter structure (ERMES) or MDM complex, composed of MMM1, MDM10, MDM12 and MDM34.

The protein localises to the mitochondrion outer membrane. Component of the ERMES/MDM complex, which serves as a molecular tether to connect the endoplasmic reticulum (ER) and mitochondria. Components of this complex are involved in the control of mitochondrial shape and protein biogenesis, and function in nonvesicular lipid trafficking between the ER and mitochondria. MDM34 is required for the interaction of the ER-resident membrane protein MMM1 and the outer mitochondrial membrane-resident beta-barrel protein MDM10. This is Mitochondrial distribution and morphology protein 34 from Vanderwaltozyma polyspora (strain ATCC 22028 / DSM 70294 / BCRC 21397 / CBS 2163 / NBRC 10782 / NRRL Y-8283 / UCD 57-17) (Kluyveromyces polysporus).